We begin with the raw amino-acid sequence, 380 residues long: Cytochrome b (380 aa).

The next 4 helical transmembrane spans lie at 34–54 (FGSL…LLAM), 78–99 (WLIR…YLHI), 114–134 (WNTG…GYVL), and 179–199 (FFAL…IHLT). Residues His84 and His98 each coordinate heme b. Heme b-binding residues include His183 and His197. His202 lines the a ubiquinone pocket. 4 consecutive transmembrane segments (helical) span residues 227-247 (SKDI…ALLS), 289-309 (LGGV…PFLH), 321-341 (LSQA…WIGS), and 348-368 (FIII…ILLP).

Belongs to the cytochrome b family. The cytochrome bc1 complex contains 11 subunits: 3 respiratory subunits (MT-CYB, CYC1 and UQCRFS1), 2 core proteins (UQCRC1 and UQCRC2) and 6 low-molecular weight proteins (UQCRH/QCR6, UQCRB/QCR7, UQCRQ/QCR8, UQCR10/QCR9, UQCR11/QCR10 and a cleavage product of UQCRFS1). This cytochrome bc1 complex then forms a dimer. Heme b is required as a cofactor.

It localises to the mitochondrion inner membrane. In terms of biological role, component of the ubiquinol-cytochrome c reductase complex (complex III or cytochrome b-c1 complex) that is part of the mitochondrial respiratory chain. The b-c1 complex mediates electron transfer from ubiquinol to cytochrome c. Contributes to the generation of a proton gradient across the mitochondrial membrane that is then used for ATP synthesis. The sequence is that of Cytochrome b (MT-CYB) from Phalcoboenus australis (Striated caracara).